The primary structure comprises 251 residues: Hydroxyacylglutathione hydrolase (251 aa).

Zn(2+) is bound by residues His53, His55, Asp57, His58, His110, Asp127, and His165.

The protein belongs to the metallo-beta-lactamase superfamily. Glyoxalase II family. As to quaternary structure, monomer. Requires Zn(2+) as cofactor.

The catalysed reaction is an S-(2-hydroxyacyl)glutathione + H2O = a 2-hydroxy carboxylate + glutathione + H(+). Its pathway is secondary metabolite metabolism; methylglyoxal degradation; (R)-lactate from methylglyoxal: step 2/2. Thiolesterase that catalyzes the hydrolysis of S-D-lactoyl-glutathione to form glutathione and D-lactic acid. The chain is Hydroxyacylglutathione hydrolase from Serratia proteamaculans (strain 568).